A 190-amino-acid polypeptide reads, in one-letter code: Guanylate kinase (190 aa).

The region spanning Asn3–Glu185 is the Guanylate kinase-like domain. Ala10–Ser17 is an ATP binding site.

Belongs to the guanylate kinase family.

The protein localises to the cytoplasm. It carries out the reaction GMP + ATP = GDP + ADP. In terms of biological role, essential for recycling GMP and indirectly, cGMP. In Francisella tularensis subsp. holarctica (strain LVS), this protein is Guanylate kinase.